A 764-amino-acid polypeptide reads, in one-letter code: Subtilisin-like protease SBT3.1 (764 aa).

A signal peptide spans 1–32; the sequence is MIQTLKTDSSFRLCFAAIAFGFVFIMNGKLSS. The propeptide at 33–120 is activation peptide; that stretch reads GTTPHEFPVY…LLENRKLGLQ (88 aa). In terms of domain architecture, Inhibitor I9 spans 41 to 116; that stretch reads VYIFYLGERK…EVIILLENRK (76 aa). N-linked (GlcNAc...) asparagine glycosylation occurs at asparagine 76. The region spanning 124-610 is the Peptidase S8 domain; the sequence is TWDYLGQFST…GGLVNLEKAT (487 aa). Aspartate 156 serves as the catalytic Charge relay system. A glycan (N-linked (GlcNAc...) asparagine) is linked at asparagine 216. The Charge relay system role is filled by histidine 230. Residues asparagine 245 and asparagine 374 are each glycosylated (N-linked (GlcNAc...) asparagine). Serine 541 serves as the catalytic Charge relay system. Asparagine 674, asparagine 711, and asparagine 747 each carry an N-linked (GlcNAc...) asparagine glycan.

This sequence belongs to the peptidase S8 family.

The protein resides in the secreted. The sequence is that of Subtilisin-like protease SBT3.1 from Arabidopsis thaliana (Mouse-ear cress).